Consider the following 113-residue polypeptide: MKKSISVLRKESQIKNFISTIITNELTNANIYNPTVTDVVLSTDLGHVKVFLAFSSKENDGLDAVKNASGYIRKRLSKTLNWRKVPELHFYIDEVEKKAFEIDQILNSLKNEE.

It belongs to the RbfA family. Monomer. Binds 30S ribosomal subunits, but not 50S ribosomal subunits or 70S ribosomes.

The protein resides in the cytoplasm. In terms of biological role, one of several proteins that assist in the late maturation steps of the functional core of the 30S ribosomal subunit. Associates with free 30S ribosomal subunits (but not with 30S subunits that are part of 70S ribosomes or polysomes). Required for efficient processing of 16S rRNA. May interact with the 5'-terminal helix region of 16S rRNA. This chain is Ribosome-binding factor A, found in Mycoplasmopsis agalactiae (strain NCTC 10123 / CIP 59.7 / PG2) (Mycoplasma agalactiae).